The following is a 197-amino-acid chain: Dephospho-CoA kinase (197 aa).

Residues 2 to 197 (IVGLTGGIAS…YQQILSLNAA (196 aa)) form the DPCK domain. An ATP-binding site is contributed by 10-15 (ASGKTL).

The protein belongs to the CoaE family.

The protein resides in the cytoplasm. The enzyme catalyses 3'-dephospho-CoA + ATP = ADP + CoA + H(+). It functions in the pathway cofactor biosynthesis; coenzyme A biosynthesis; CoA from (R)-pantothenate: step 5/5. Functionally, catalyzes the phosphorylation of the 3'-hydroxyl group of dephosphocoenzyme A to form coenzyme A. The chain is Dephospho-CoA kinase from Dichelobacter nodosus (Bacteroides nodosus).